The primary structure comprises 900 residues: uncharacterized protein (900 aa).

Basic and acidic residues predominate over residues 1–16; sequence MGSNKEAKNIDSKNDR. Disordered stretches follow at residues 1-84, 103-160, 512-556, 568-613, and 648-676; these read MGSN…KLSS, NSSR…PDPS, NFNQ…KKSG, LAST…KSAN, and KRSS…NSFP. A compositionally biased stretch (polar residues) spans 17–27; the sequence is GLTSITSNKIS. Over residues 30–58 the composition is skewed to basic and acidic residues; sequence KAHDNHTSSMITEHKNADKEKGKQEKESR. Composition is skewed to low complexity over residues 63 to 76 and 103 to 127; these read QSSS…PQVS and NSSR…QLSK. Ser105 carries the phosphoserine modification. Residues 129-143 show a composition bias toward basic residues; the sequence is GLHHHHTSNNKHSHR. Low complexity predominate over residues 528 to 537; that stretch reads SSRSLSLPSS. A compositionally biased stretch (basic residues) spans 543-553; it reads KRKKSPTKATK. Composition is skewed to low complexity over residues 570 to 601 and 665 to 676; these read STSH…SSPP and SPISSNSDNSFP.

This is an uncharacterized protein from Saccharomyces cerevisiae (strain ATCC 204508 / S288c) (Baker's yeast).